The following is a 393-amino-acid chain: N-lysine methyltransferase KMT5A (393 aa).

The disordered stretch occupies residues 68–88 (PGPEMVERRGPGRPRTDGENV). Residues 72 to 85 (MVERRGPGRPRTDG) are compositionally biased toward basic and acidic residues. At Ser-100 the chain carries Phosphoserine. The stretch at 134 to 163 (RKREEKRNAGNAVRSAMKSEEQKIKDARKG) forms a coiled coil. The disordered stretch occupies residues 135 to 241 (KREEKRNAGN…SRKSKAELQS (107 aa)). The segment covering 150 to 162 (MKSEEQKIKDARK) has biased composition (basic and acidic residues). N6-acetyllysine is present on Lys-162. Position 181 is a phosphothreonine (Thr-181). Positions 197–213 (ALKKPIKGKQAPRKKAQ) are enriched in basic residues. An SET domain is found at 257 to 378 (EGMKIDLIDG…AGEELLYDYG (122 aa)). S-adenosyl-L-methionine is bound by residues 267 to 269 (KGR), Tyr-312, and 339 to 340 (NH).

Belongs to the class V-like SAM-binding methyltransferase superfamily. Histone-lysine methyltransferase family. PR/SET subfamily. Interacts with L3MBTL1. As to quaternary structure, interacts with SIRT2 (phosphorylated form); the interaction is direct, stimulates KMT5A-mediated methyltransferase activity at histone H4 'Lys-20' (H4K20me1) and is increased in a H(2)O(2)-induced oxidative stress-dependent manner. Acetylated at Lys-162; does not affect methyltransferase activity. Deacetylated at Lys-162 possibly by SIRT2; does not change methyltransferase activity. Post-translationally, ubiquitinated and degraded by the DCX(DTL) complex.

It is found in the nucleus. It localises to the chromosome. The enzyme catalyses L-lysyl(20)-[histone H4] + S-adenosyl-L-methionine = N(6)-methyl-L-lysyl(20)-[histone H4] + S-adenosyl-L-homocysteine + H(+). It catalyses the reaction L-lysyl-[protein] + S-adenosyl-L-methionine = N(6)-methyl-L-lysyl-[protein] + S-adenosyl-L-homocysteine + H(+). Protein-lysine N-methyltransferase that monomethylates both histones and non-histone proteins. Specifically monomethylates 'Lys-20' of histone H4 (H4K20me1). H4K20me1 is enriched during mitosis and represents a specific tag for epigenetic transcriptional repression. Mainly functions in euchromatin regions, thereby playing a central role in the silencing of euchromatic genes. Required for cell proliferation, probably by contributing to the maintenance of proper higher-order structure of DNA during mitosis. Involved in chromosome condensation and proper cytokinesis. Nucleosomes are preferred as substrate compared to free histones. Mediates monomethylation of p53/TP53 at 'Lys-382', leading to repress p53/TP53-target genes. Plays a negative role in TGF-beta response regulation and a positive role in cell migration. This Homo sapiens (Human) protein is N-lysine methyltransferase KMT5A.